A 2049-amino-acid chain; its full sequence is Polyglutamine-repeat protein pqn-41 (2049 aa).

The segment at 1 to 58 (MKPKKLQQGSDSAHTSDTESTKTCEKTAKKLPKTQKKLQKSKKTAKKRRDEEFRIFFP) is disordered. Residues 1 to 1601 (MKPKKLQQGS…TTSQHQQSIQ (1601 aa)) form a sufficient to prevent linker cell death region. The span at 14–28 (HTSDTESTKTCEKTA) shows a compositional bias: basic and acidic residues. Basic residues predominate over residues 29–47 (KKLPKTQKKLQKSKKTAKK). 2 coiled-coil regions span residues 264 to 302 (RRQE…ANSD) and 396 to 432 (TNAG…DRNH). Residues 459 to 492 (RGRNSTENSDSESSSEASEPPDDVITKEEPTDFS) are disordered. Over residues 463–476 (STENSDSESSSEAS) the composition is skewed to low complexity. 3 coiled-coil regions span residues 686–730 (ESFE…SFET), 756–796 (ISAD…REFS), and 822–880 (QSSI…ARKL). Residues 1134 to 1150 (QQQHNHQNFQQQQQGNH) are compositionally biased toward low complexity. Disordered stretches follow at residues 1134-1198 (QQQH…ENAA), 1236-1265 (AAAA…QQQN), 1481-1616 (YKQS…GAAY), and 1636-1661 (ATPK…TSQA). Residues 1162–1171 (QKRKYTKRKA) are compositionally biased toward basic residues. The segment covering 1176-1194 (AVASSSDQNGMKSPGSSAM) has biased composition (polar residues). Residues 1495 to 1533 (STSSSSAAPASAPAPRAGAGAGATSSSAASSSTSTPSSS) show a composition bias toward low complexity. A compositionally biased stretch (basic residues) spans 1534–1546 (SHHKKSSPPHHQK). 2 stretches are compositionally biased toward low complexity: residues 1569-1604 (SAPI…QFSQ) and 1649-1661 (ATQQ…TSQA). Coiled-coil stretches lie at residues 1659 to 1685 (SQAS…AAAA) and 1725 to 1801 (QQYL…LQNI). Residues 1836–1858 (AQAQQAPPTSQPSQAATPQQQQQ) are disordered. Coiled coils occupy residues 1863–1961 (RQME…AAAA) and 1991–2041 (SAQQ…AQQK).

As to expression, expressed in the linker cell just before it dies.

The protein localises to the cytoplasm. Functionally, in males, required for non-apoptotic death of the linker cell once it has finished guiding gonad elongation at the end of larval development. May be involved in nuclear envelope crenellation in the linker cell. In males, promotes linker cell survival. This Caenorhabditis elegans protein is Polyglutamine-repeat protein pqn-41.